The sequence spans 406 residues: Cysteine desulfurase (406 aa).

At K226 the chain carries N6-(pyridoxal phosphate)lysine. The active-site Cysteine persulfide intermediate is the C364.

Belongs to the class-V pyridoxal-phosphate-dependent aminotransferase family. Csd subfamily. As to quaternary structure, homodimer. Interacts with SufE and the SufBCD complex composed of SufB, SufC and SufD. The interaction with SufE is required to mediate the direct transfer of the sulfur atom from the S-sulfanylcysteine. Pyridoxal 5'-phosphate is required as a cofactor.

Its subcellular location is the cytoplasm. It catalyses the reaction (sulfur carrier)-H + L-cysteine = (sulfur carrier)-SH + L-alanine. The catalysed reaction is L-selenocysteine + AH2 = hydrogenselenide + L-alanine + A + H(+). The protein operates within cofactor biosynthesis; iron-sulfur cluster biosynthesis. Cysteine desulfurases mobilize the sulfur from L-cysteine to yield L-alanine, an essential step in sulfur metabolism for biosynthesis of a variety of sulfur-containing biomolecules. Component of the suf operon, which is activated and required under specific conditions such as oxidative stress and iron limitation. Acts as a potent selenocysteine lyase in vitro, that mobilizes selenium from L-selenocysteine. Selenocysteine lyase activity is however unsure in vivo. This is Cysteine desulfurase from Escherichia coli O6:K15:H31 (strain 536 / UPEC).